A 342-amino-acid polypeptide reads, in one-letter code: tRNA N6-adenosine threonylcarbamoyltransferase (342 aa).

The Fe cation site is built by His114 and His118. Substrate is bound by residues 136–140 (LVSGG), Asp169, Gly182, Asp186, and Asn275. Asp301 provides a ligand contact to Fe cation.

This sequence belongs to the KAE1 / TsaD family. Fe(2+) serves as cofactor.

Its subcellular location is the cytoplasm. The enzyme catalyses L-threonylcarbamoyladenylate + adenosine(37) in tRNA = N(6)-L-threonylcarbamoyladenosine(37) in tRNA + AMP + H(+). Required for the formation of a threonylcarbamoyl group on adenosine at position 37 (t(6)A37) in tRNAs that read codons beginning with adenine. Is involved in the transfer of the threonylcarbamoyl moiety of threonylcarbamoyl-AMP (TC-AMP) to the N6 group of A37, together with TsaE and TsaB. TsaD likely plays a direct catalytic role in this reaction. The polypeptide is tRNA N6-adenosine threonylcarbamoyltransferase (Streptococcus pyogenes serotype M18 (strain MGAS8232)).